The sequence spans 804 residues: Phenylalanine--tRNA ligase beta subunit (804 aa).

One can recognise a tRNA-binding domain in the interval 39 to 147 (GPSFSNVVVA…PNLPLGEDLA (109 aa)). Residues 402-480 (ETVGEIHLRC…RIHGYDNIPV (79 aa)) form the B5 domain. Mg(2+) contacts are provided by D458, D464, E467, and E468. The FDX-ACB domain occupies 711-804 (SRYPESSRDV…IIDQTGARVR (94 aa)).

Belongs to the phenylalanyl-tRNA synthetase beta subunit family. Type 1 subfamily. As to quaternary structure, tetramer of two alpha and two beta subunits. Mg(2+) is required as a cofactor.

The protein resides in the cytoplasm. The enzyme catalyses tRNA(Phe) + L-phenylalanine + ATP = L-phenylalanyl-tRNA(Phe) + AMP + diphosphate + H(+). This chain is Phenylalanine--tRNA ligase beta subunit, found in Syntrophus aciditrophicus (strain SB).